Consider the following 359-residue polypeptide: MTLGPLMLDVAGTELCDDDRRRLSDPLVGGVILFSRNYRDPAQLAALCEEIHALKAAPLLIGVDHEGGRVQRFRDGFTRLPPMRSLGAIWNEHPQRARELARETGYVLASELRAHGVDFSFAPVLDLDYGASSVIGDRAFHADPQAVFQLGQAVMLGMKDAGMAACGKHFPGHGFVIADSHVDIPVDRRTLGDIARADLVPFRLMVEAGLAAMMPAHVIYPEVDAQPAGFSRVWLQKILRQQLGFDGAVFSDDLCMAGAAFAGGIVERVRAALDAGCDMALVCNHPELADEVLAKLDVDWPAPARARLARMHGHPAHAPTMTALRESARYAEALHHVAGLGRDSAELDLSDPTDYCGRA.

Residues aspartate 64, arginine 72, arginine 138, and 168 to 169 (KH) contribute to the substrate site. Catalysis depends on histidine 181, which acts as the Proton donor/acceptor. Aspartate 252 (nucleophile) is an active-site residue.

The protein belongs to the glycosyl hydrolase 3 family. NagZ subfamily.

It localises to the cytoplasm. The enzyme catalyses Hydrolysis of terminal non-reducing N-acetyl-D-hexosamine residues in N-acetyl-beta-D-hexosaminides.. The protein operates within cell wall biogenesis; peptidoglycan recycling. Plays a role in peptidoglycan recycling by cleaving the terminal beta-1,4-linked N-acetylglucosamine (GlcNAc) from peptide-linked peptidoglycan fragments, giving rise to free GlcNAc, anhydro-N-acetylmuramic acid and anhydro-N-acetylmuramic acid-linked peptides. The sequence is that of Beta-hexosaminidase from Thiobacillus denitrificans (strain ATCC 25259 / T1).